An 850-amino-acid polypeptide reads, in one-letter code: Transcription initiation factor TFIID subunit 4B (850 aa).

The sufficient for interaction with ZNF628 stretch occupies residues 99 to 240; the sequence is GTTTIQLPAN…TPSNDARLKA (142 aa). Positions 256–353 constitute a TAFH domain; the sequence is ENVKKCKNFL…VKEVSGDVVI (98 aa). The tract at residues 504-526 is required for interaction with P65/RELA; sequence PSTLLPQAAGIPQTAKVKQLVVQ. Residues 509-549 carry the Nuclear export signal motif; it reads PQAAGIPQTAKVKQLVVQQPSGSSVNHVTSISHSSPLSTQN. Serine 584 bears the Phosphoserine mark. Positions 642-691 constitute a Histone-fold domain; the sequence is PFLVIGALQKRILDIGKKHDITELNSDAVNLISHATQERLRGLLEKLTTI. The interval 788-812 is disordered; it reads KRPLESGNESFKDNPSTSGTSSLTA. Polar residues predominate over residues 794 to 812; the sequence is GNESFKDNPSTSGTSSLTA. The tract at residues 818–850 is required for interaction with TAF12; sequence PRITRICLRDLIFCMEQEREMKYSRALYLALLK.

This sequence belongs to the TAF4 family. As to quaternary structure, TFIID is composed of TATA binding protein (TBP) and a number of TBP-associated factors (TAFs). Heterodimerizes with TAF12/TFII20 via the C-terminal H2A-like histone-fold domain. This heterodimer forms a histone-like octamer with the TAF6/TAFII70-TAF9/TAFII31 heterodimer. Interacts with P65/RELA homodimers and P65/RELA-REL heterodimers. Interaction with POU2AF1, via its C-terminal activation domain, is required for octamer-dependent transcription. Interacts with ZNF628. In terms of tissue distribution, highly expressed in the testes and ovary, whereas lower levels are detected in most other tissues.

The protein resides in the nucleus. Its subcellular location is the cytoplasm. Functionally, cell type-specific subunit of the general transcription factor TFIID that may function as a gene-selective coactivator in certain cells. TFIID is a multimeric protein complex that plays a central role in mediating promoter responses to various activators asond repressors. TAF4B is a transcriptional coactivator of the p65/RELA NF-kappa-B subunit. Involved in the activation of a subset of antiapoptotic genes including TNFAIP3. Through interaction with OCBA/POU2AF1, acts as a coactivator of B-cell-specific transcription. Plays a role in spermiogenesis and oogenesis. In Mus musculus (Mouse), this protein is Transcription initiation factor TFIID subunit 4B (Taf4b).